The following is a 373-amino-acid chain: tRNA-specific 2-thiouridylase MnmA (373 aa).

ATP-binding positions include 12–19 and methionine 38; that span reads GMSGGVDS. The interaction with target base in tRNA stretch occupies residues 98-100; that stretch reads NPD. Catalysis depends on cysteine 103, which acts as the Nucleophile. Cysteine 103 and cysteine 200 are disulfide-bonded. Glycine 127 serves as a coordination point for ATP. Positions 150–152 are interaction with tRNA; that stretch reads KDQ. Cysteine 200 acts as the Cysteine persulfide intermediate in catalysis. The tract at residues 312-313 is interaction with tRNA; it reads RY.

The protein belongs to the MnmA/TRMU family.

The protein localises to the cytoplasm. The enzyme catalyses S-sulfanyl-L-cysteinyl-[protein] + uridine(34) in tRNA + AH2 + ATP = 2-thiouridine(34) in tRNA + L-cysteinyl-[protein] + A + AMP + diphosphate + H(+). Functionally, catalyzes the 2-thiolation of uridine at the wobble position (U34) of tRNA, leading to the formation of s(2)U34. This chain is tRNA-specific 2-thiouridylase MnmA, found in Streptococcus pyogenes serotype M49 (strain NZ131).